A 196-amino-acid polypeptide reads, in one-letter code: Small ribosomal subunit protein uS4c (196 aa).

Positions L15–Q43 are disordered. Residues M89–N150 enclose the S4 RNA-binding domain.

Belongs to the universal ribosomal protein uS4 family. As to quaternary structure, part of the 30S ribosomal subunit. Contacts protein S5. The interaction surface between S4 and S5 is involved in control of translational fidelity.

The protein localises to the plastid. The protein resides in the chloroplast. Its function is as follows. One of the primary rRNA binding proteins, it binds directly to 16S rRNA where it nucleates assembly of the body of the 30S subunit. In terms of biological role, with S5 and S12 plays an important role in translational accuracy. The protein is Small ribosomal subunit protein uS4c (rps4) of Melinis repens (Red Natal grass).